Reading from the N-terminus, the 891-residue chain is DNA mismatch repair protein MutS (891 aa).

634-641 (GPNMGGKS) is a binding site for ATP.

The protein belongs to the DNA mismatch repair MutS family.

Functionally, this protein is involved in the repair of mismatches in DNA. It is possible that it carries out the mismatch recognition step. This protein has a weak ATPase activity. This is DNA mismatch repair protein MutS from Burkholderia pseudomallei (strain 1106a).